The chain runs to 123 residues: Protein Wnt-7a (123 aa).

S1 is lipidated: O-palmitoleoyl serine; by PORCN. Residues 33–61 (VEPVRASRNKRPTFLKIKKPLSYLKPMDT) are disordered linker. An intrachain disulfide couples C89 to C104. N-linked (GlcNAc...) asparagine glycosylation is present at N90.

Belongs to the Wnt family. In terms of processing, palmitoleoylation is required for efficient binding to frizzled receptors. Depalmitoleoylation leads to Wnt signaling pathway inhibition.

The protein localises to the secreted. It is found in the extracellular space. The protein resides in the extracellular matrix. Its function is as follows. Ligand for members of the frizzled family of seven transmembrane receptors that functions in the canonical Wnt/beta-catenin signaling pathway. Plays an important role in embryonic development, including dorsal versus ventral patterning during limb development, skeleton development and urogenital tract development. Required for central nervous system (CNS) angiogenesis and blood-brain barrier regulation. The polypeptide is Protein Wnt-7a (WNT-7A) (Plethodon jordani (Red-cheeked salamander)).